Reading from the N-terminus, the 229-residue chain is Flagellar L-ring protein (229 aa).

An N-terminal signal peptide occupies residues 1-23 (MSPLTRIALALAASAALVLALTA). Residue Cys24 is the site of N-palmitoyl cysteine attachment. Cys24 is lipidated: S-diacylglycerol cysteine.

This sequence belongs to the FlgH family. In terms of assembly, the basal body constitutes a major portion of the flagellar organelle and consists of four rings (L,P,S, and M) mounted on a central rod.

Its subcellular location is the cell outer membrane. It is found in the bacterial flagellum basal body. In terms of biological role, assembles around the rod to form the L-ring and probably protects the motor/basal body from shearing forces during rotation. The polypeptide is Flagellar L-ring protein (Anaeromyxobacter dehalogenans (strain 2CP-C)).